Reading from the N-terminus, the 164-residue chain is Phosphopantetheine adenylyltransferase (164 aa).

S9 is a substrate binding site. Residues 9–10 (SF) and H17 contribute to the ATP site. Substrate contacts are provided by K41, L73, and K87. ATP contacts are provided by residues 88 to 90 (GLR), E98, and 123 to 129 (YSYLSSS).

The protein belongs to the bacterial CoaD family. In terms of assembly, homohexamer. Mg(2+) is required as a cofactor.

The protein localises to the cytoplasm. The enzyme catalyses (R)-4'-phosphopantetheine + ATP + H(+) = 3'-dephospho-CoA + diphosphate. It functions in the pathway cofactor biosynthesis; coenzyme A biosynthesis; CoA from (R)-pantothenate: step 4/5. In terms of biological role, reversibly transfers an adenylyl group from ATP to 4'-phosphopantetheine, yielding dephospho-CoA (dPCoA) and pyrophosphate. This is Phosphopantetheine adenylyltransferase from Clostridium botulinum (strain 657 / Type Ba4).